The primary structure comprises 347 residues: Single-pass membrane and coiled-coil domain-containing protein 2 (347 aa).

The disordered stretch occupies residues 1 to 89 (MMSLQLGTAG…PPSKPDEQEV (89 aa)). Basic and acidic residues-rich tracts occupy residues 10 to 21 (GKERQLAEKSRD), 36 to 51 (EMDHISDRPDEKDKPS), and 60 to 86 (YKMDTEKWDGLEQESEHSQDPPSKPDE). Positions 139–238 (DWLERINNII…MNVLNSKLEM (100 aa)) form a coiled coil. A Phosphoserine modification is found at S178. Residues 243–274 (GSDADSHNSEDVDTEQEEPLVPEASPSLSASP) are disordered. Positions 253–262 (DVDTEQEEPL) are enriched in acidic residues. The segment covering 263–273 (VPEASPSLSAS) has biased composition (low complexity). A helical membrane pass occupies residues 288-308 (LFVIVYVVTITGLSCYILFVD).

The protein localises to the membrane. This is Single-pass membrane and coiled-coil domain-containing protein 2 (Smco2) from Mus musculus (Mouse).